The primary structure comprises 54 residues: UPF0391 membrane protein Oant_1245 (54 aa).

Transmembrane regions (helical) follow at residues 5–25 and 29–48; these read ALVF…GIAG and GIAQ…SLIA.

It belongs to the UPF0391 family.

The protein localises to the cell membrane. This Brucella anthropi (strain ATCC 49188 / DSM 6882 / CCUG 24695 / JCM 21032 / LMG 3331 / NBRC 15819 / NCTC 12168 / Alc 37) (Ochrobactrum anthropi) protein is UPF0391 membrane protein Oant_1245.